The chain runs to 198 residues: Nucleoid occlusion factor SlmA (198 aa).

Residues 10-70 (NRREEILQSL…SLIEFIEDSL (61 aa)) form the HTH tetR-type domain. Residues 33 to 52 (TTAKLAASVGVSEAALYRHF) constitute a DNA-binding region (H-T-H motif). Residues 117–144 (EQDRLQGRINQLFERIEAQLRQVLREKR) adopt a coiled-coil conformation.

This sequence belongs to the nucleoid occlusion factor SlmA family. In terms of assembly, homodimer. Interacts with FtsZ.

It localises to the cytoplasm. It is found in the nucleoid. Functionally, required for nucleoid occlusion (NO) phenomenon, which prevents Z-ring formation and cell division over the nucleoid. Acts as a DNA-associated cell division inhibitor that binds simultaneously chromosomal DNA and FtsZ, and disrupts the assembly of FtsZ polymers. SlmA-DNA-binding sequences (SBS) are dispersed on non-Ter regions of the chromosome, preventing FtsZ polymerization at these regions. This chain is Nucleoid occlusion factor SlmA, found in Salmonella agona (strain SL483).